The primary structure comprises 383 residues: Thioredoxin reductase 2 (383 aa).

Residues 66 to 69 (SGPA), 87 to 88 (FE), 95 to 100 (IAPGGQ), asparagine 109, valine 142, cysteine 200, aspartate 345, and 352 to 354 (RQA) each bind FAD. Cysteines 197 and 200 form a disulfide.

It belongs to the class-II pyridine nucleotide-disulfide oxidoreductase family. In terms of assembly, homodimer. It depends on FAD as a cofactor.

It is found in the cytoplasm. The protein resides in the mitochondrion matrix. It catalyses the reaction [thioredoxin]-dithiol + NADP(+) = [thioredoxin]-disulfide + NADPH + H(+). Its function is as follows. Possesses thioredoxin-disulfide reductase activity towards thioredoxins O1, O2 and F3. The sequence is that of Thioredoxin reductase 2 (NTR2) from Arabidopsis thaliana (Mouse-ear cress).